A 245-amino-acid polypeptide reads, in one-letter code: 1-(5-phosphoribosyl)-5-[(5-phosphoribosylamino)methylideneamino] imidazole-4-carboxamide isomerase (245 aa).

Catalysis depends on aspartate 7, which acts as the Proton acceptor. Aspartate 129 (proton donor) is an active-site residue.

Belongs to the HisA/HisF family.

Its subcellular location is the cytoplasm. It catalyses the reaction 1-(5-phospho-beta-D-ribosyl)-5-[(5-phospho-beta-D-ribosylamino)methylideneamino]imidazole-4-carboxamide = 5-[(5-phospho-1-deoxy-D-ribulos-1-ylimino)methylamino]-1-(5-phospho-beta-D-ribosyl)imidazole-4-carboxamide. It functions in the pathway amino-acid biosynthesis; L-histidine biosynthesis; L-histidine from 5-phospho-alpha-D-ribose 1-diphosphate: step 4/9. The polypeptide is 1-(5-phosphoribosyl)-5-[(5-phosphoribosylamino)methylideneamino] imidazole-4-carboxamide isomerase (Shewanella piezotolerans (strain WP3 / JCM 13877)).